A 705-amino-acid polypeptide reads, in one-letter code: Ovotransferrin (705 aa).

The first 19 residues, 1–19 (MKLILCTVLSLGIAAVCFA), serve as a signal peptide directing secretion. 2 Transferrin-like domains span residues 26–352 (IRWC…SMRK) and 364–689 (IQWC…SLKT). 2 disulfides stabilise this stretch: Cys-29–Cys-64 and Cys-39–Cys-55. Fe(3+) contacts are provided by Asp-79 and Tyr-111. 4 disulfides stabilise this stretch: Cys-134–Cys-216, Cys-179–Cys-193, Cys-190–Cys-201, and Cys-247–Cys-261. Hydrogencarbonate is bound by residues Thr-136, Arg-140, Ala-142, and Gly-143. Position 210 (Tyr-210) interacts with Fe(3+). His-269 provides a ligand contact to Fe(3+). Residues 352-360 (KDQLTPSPR) form a connecting region region. Disulfide bonds link Cys-367–Cys-399 and Cys-377–Cys-390. The Fe(3+) site is built by Asp-414 and Tyr-450. Intrachain disulfides connect Cys-424–Cys-699, Cys-440–Cys-662, Cys-473–Cys-549, Cys-497–Cys-690, Cys-507–Cys-521, Cys-518–Cys-532, and Cys-589–Cys-603. Hydrogencarbonate contacts are provided by Thr-475, Arg-479, Ala-481, and Gly-482. The N-linked (GlcNAc...) asparagine glycan is linked to Asn-492. Tyr-543 is a Fe(3+) binding site. Fe(3+) is bound at residue His-611.

Belongs to the transferrin family. In terms of assembly, monomer. Post-translationally, different forms of hen transferrin are distinguished by their carbohydrate composition. Ovotransferrin and embryo serum transferrin but not adult serum transferrin, have bisecting N-acetylglucosamine. Transferrin secreted by embryo hepatocytes in primary culture is marked by the presence of (alpha1-6) fucosylation of the core N-acetylglucosamine. Serum transferrins also differ in the number of attached neuraminic acid residues. In both embryo forms, sialylation occurs on the Man (alpha 1-3)-linked antennae. As to expression, expressed in the magnum of the oviduct (at protein level).

The protein localises to the secreted. Transferrins are iron binding transport proteins which can bind two Fe(3+) ions in association with the binding of an anion, usually bicarbonate. Responsible for the transport of iron from sites of absorption and heme degradation to those of storage and utilization. There are two forms of hen transferrin, ovotransferrin, found in the ovoducts and, serum transferrin, secreted by the liver. Serum transferrin may also have a role in stimulating cell proliferation and is regulated by iron levels. Ovotransferrin has a bacteriostatic function and, is not controlled by iron levels. This Gallus gallus (Chicken) protein is Ovotransferrin.